A 470-amino-acid polypeptide reads, in one-letter code: UDP-N-acetylmuramate--L-alanine ligase (470 aa).

118–124 (GTHGKTT) provides a ligand contact to ATP.

The protein belongs to the MurCDEF family.

It localises to the cytoplasm. It carries out the reaction UDP-N-acetyl-alpha-D-muramate + L-alanine + ATP = UDP-N-acetyl-alpha-D-muramoyl-L-alanine + ADP + phosphate + H(+). Its pathway is cell wall biogenesis; peptidoglycan biosynthesis. Its function is as follows. Cell wall formation. In Cereibacter sphaeroides (strain KD131 / KCTC 12085) (Rhodobacter sphaeroides), this protein is UDP-N-acetylmuramate--L-alanine ligase.